Here is a 968-residue protein sequence, read N- to C-terminus: RNA polymerase-associated protein RapA (968 aa).

Positions 164–334 (DVGRRHAPRV…FARLRLLDPN (171 aa)) constitute a Helicase ATP-binding domain. 177–184 (DEVGLGKT) serves as a coordination point for ATP. A DEAH box motif is present at residues 280-283 (DEAH). The region spanning 490-662 (RVEWLMGYLT…YLASPDQTEG (173 aa)) is the Helicase C-terminal domain.

The protein belongs to the SNF2/RAD54 helicase family. RapA subfamily. Interacts with the RNAP. Has a higher affinity for the core RNAP than for the holoenzyme. Its ATPase activity is stimulated by binding to RNAP.

In terms of biological role, transcription regulator that activates transcription by stimulating RNA polymerase (RNAP) recycling in case of stress conditions such as supercoiled DNA or high salt concentrations. Probably acts by releasing the RNAP, when it is trapped or immobilized on tightly supercoiled DNA. Does not activate transcription on linear DNA. Probably not involved in DNA repair. The polypeptide is RNA polymerase-associated protein RapA (Shigella flexneri serotype 5b (strain 8401)).